A 167-amino-acid chain; its full sequence is Phosphopantetheine adenylyltransferase (167 aa).

Thr10 lines the substrate pocket. Residues 10 to 11 and His18 contribute to the ATP site; that span reads TF. 2 residues coordinate substrate: Ala77 and Arg91. Residues 92–94, Glu102, and 127–133 contribute to the ATP site; these read GLR and YSFISSS.

The protein belongs to the bacterial CoaD family. As to quaternary structure, homohexamer. The cofactor is Mg(2+).

The protein localises to the cytoplasm. The enzyme catalyses (R)-4'-phosphopantetheine + ATP + H(+) = 3'-dephospho-CoA + diphosphate. It functions in the pathway cofactor biosynthesis; coenzyme A biosynthesis; CoA from (R)-pantothenate: step 4/5. Reversibly transfers an adenylyl group from ATP to 4'-phosphopantetheine, yielding dephospho-CoA (dPCoA) and pyrophosphate. The sequence is that of Phosphopantetheine adenylyltransferase from Thermomicrobium roseum (strain ATCC 27502 / DSM 5159 / P-2).